We begin with the raw amino-acid sequence, 330 residues long: RNA polymerase sigma factor RpoS (330 aa).

Residues 56-89 (DATQLYLGEIGYSPLLTAEEEVYFARRALRGDVA) are sigma-70 factor domain-1. The segment at 94-164 (MIESNLRLVV…ERAIMNQTRT (71 aa)) is sigma-70 factor domain-2. An Interaction with polymerase core subunit RpoC motif is present at residues 118-121 (DLIE). A sigma-70 factor domain-3 region spans residues 174 to 249 (ELNVYLRTAR…DEKENGPEDT (76 aa)). A sigma-70 factor domain-4 region spans residues 262–315 (WLFELNAKQREVLARRFGLLGYEAATLEDVGREIGLTRERVRQIQVEGLRRLRE). A DNA-binding region (H-T-H motif) is located at residues 288–307 (LEDVGREIGLTRERVRQIQV).

The protein belongs to the sigma-70 factor family. RpoS subfamily. As to quaternary structure, interacts with the RNA polymerase core enzyme.

Its subcellular location is the cytoplasm. Functionally, sigma factors are initiation factors that promote the attachment of RNA polymerase to specific initiation sites and are then released. This sigma factor is the master transcriptional regulator of the stationary phase and the general stress response. In Salmonella dublin, this protein is RNA polymerase sigma factor RpoS.